We begin with the raw amino-acid sequence, 641 residues long: Sodium-dependent nutrient amino acid transporter 1 (641 aa).

The segment at 1-36 (MELKGVQPSNGSANGNGTTNAASTEKTDAEKHTPER) is disordered. Residues 1–38 (MELKGVQPSNGSANGNGTTNAASTEKTDAEKHTPERTN) are Cytoplasmic-facing. Residues 9–24 (SNGSANGNGTTNAAST) are compositionally biased toward low complexity. Basic and acidic residues predominate over residues 25 to 35 (EKTDAEKHTPE). The next 3 helical transmembrane spans lie at 39 to 59 (WGNG…LGNV), 72 to 92 (GAFL…MYYL), and 109 to 129 (SVVP…ICII). Residues Asn183 and Asn188 are each glycosylated (N-linked (GlcNAc...) asparagine). The next 9 membrane-spanning stretches (helical) occupy residues 229 to 249 (PDWK…LVIM), 258 to 278 (AAYF…IRAV), 307 to 327 (AVVQ…MFAS), 341 to 361 (IVTT…FAIL), 401 to 421 (LFSV…IVAL), 441 to 461 (VALI…TPGG), 474 to 494 (TYVV…VYGL), 516 to 536 (CWSF…MVTI), and 552 to 572 (IAGW…GLWY).

This sequence belongs to the sodium:neurotransmitter symporter (SNF) (TC 2.A.22) family.

It is found in the membrane. Its function is as follows. Unusual broad substrate spectrum amino acid:sodium cotransporter that promotes absorption of the D isomers of essential amino acids. Neutral amino acids are the preferred substrates, especially methionine and phenylalanine. This chain is Sodium-dependent nutrient amino acid transporter 1, found in Drosophila erecta (Fruit fly).